The following is a 903-amino-acid chain: Zinc finger CCCH domain-containing protein 27 (903 aa).

The disordered stretch occupies residues Met-1–His-144. Over residues Asp-11–Asn-24 the composition is skewed to basic and acidic residues. Residues Thr-33–Asp-46 are compositionally biased toward acidic residues. Positions Ser-86–Pro-96 are enriched in basic and acidic residues. A C3H1-type zinc finger spans residues Gly-225–Asn-253. The interval Ala-390–Lys-456 is disordered. Over residues Gly-397 to Asn-410 the composition is skewed to low complexity. Polar residues predominate over residues Lys-432 to Arg-441. The RRM domain occupies Arg-459 to Arg-531. Disordered regions lie at residues Lys-545 to Arg-609, Lys-642 to Pro-720, and Thr-826 to Gln-903. Residues Ser-556–Arg-576 show a composition bias toward polar residues. The segment covering Ala-577–Gly-587 has biased composition (low complexity). A coiled-coil region spans residues Lys-608–Ser-649. Over residues Ser-693–Ala-708 the composition is skewed to low complexity. The span at Thr-826–Thr-886 shows a compositional bias: polar residues.

The protein is Zinc finger CCCH domain-containing protein 27 of Oryza sativa subsp. japonica (Rice).